The sequence spans 423 residues: Serine hydroxymethyltransferase (423 aa).

Residues leucine 120 and 124 to 126 (GHL) contribute to the (6S)-5,6,7,8-tetrahydrofolate site. Lysine 229 carries the N6-(pyridoxal phosphate)lysine modification. 353 to 355 (SPF) contacts (6S)-5,6,7,8-tetrahydrofolate.

This sequence belongs to the SHMT family. Homodimer. Pyridoxal 5'-phosphate is required as a cofactor.

It is found in the cytoplasm. It carries out the reaction (6R)-5,10-methylene-5,6,7,8-tetrahydrofolate + glycine + H2O = (6S)-5,6,7,8-tetrahydrofolate + L-serine. It functions in the pathway one-carbon metabolism; tetrahydrofolate interconversion. The protein operates within amino-acid biosynthesis; glycine biosynthesis; glycine from L-serine: step 1/1. In terms of biological role, catalyzes the reversible interconversion of serine and glycine with tetrahydrofolate (THF) serving as the one-carbon carrier. This reaction serves as the major source of one-carbon groups required for the biosynthesis of purines, thymidylate, methionine, and other important biomolecules. Also exhibits THF-independent aldolase activity toward beta-hydroxyamino acids, producing glycine and aldehydes, via a retro-aldol mechanism. This is Serine hydroxymethyltransferase from Prochlorococcus marinus subsp. pastoris (strain CCMP1986 / NIES-2087 / MED4).